A 248-amino-acid polypeptide reads, in one-letter code: MAGHSQFKNIMYRKGAQDKKRSKLFAKLAKEITVAAKMGLPDPEYNPRLRAAIQAARVENMPKDNIERAIKKSSDQGGENYEEVRYEGFGPGGIGVIVETLTDNRNRTAGEVRSIFTKNGGNLGETGAVSFMFDRLGLIEYPADAASADDMIEAAIEAGADDCQSGEAGHELYCAPDALHEVAQGLESKFGEARAARIVWKPQNTIALEDEKAETVLKMLEALDDNDDVQQVYANFEMSDSLMEKMSA.

Belongs to the TACO1 family.

Its subcellular location is the cytoplasm. The polypeptide is Probable transcriptional regulatory protein Plav_2114 (Parvibaculum lavamentivorans (strain DS-1 / DSM 13023 / NCIMB 13966)).